Consider the following 373-residue polypeptide: tRNA (guanine(26)-N(2))-dimethyltransferase (373 aa).

A Trm1 methyltransferase domain is found at 2 to 365 (KIISEGETKL…AELSDLVVLI (364 aa)). S-adenosyl-L-methionine contacts are provided by Arg35, Arg66, Asp86, Asp113, and Ala114.

This sequence belongs to the class I-like SAM-binding methyltransferase superfamily. Trm1 family.

It catalyses the reaction guanosine(26) in tRNA + 2 S-adenosyl-L-methionine = N(2)-dimethylguanosine(26) in tRNA + 2 S-adenosyl-L-homocysteine + 2 H(+). Dimethylates a single guanine residue at position 26 of a number of tRNAs using S-adenosyl-L-methionine as donor of the methyl groups. In Methanococcus maripaludis (strain C6 / ATCC BAA-1332), this protein is tRNA (guanine(26)-N(2))-dimethyltransferase.